A 96-amino-acid polypeptide reads, in one-letter code: Glutamyl-tRNA(Gln) amidotransferase subunit C (96 aa).

The protein belongs to the GatC family. Heterotrimer of A, B and C subunits.

It carries out the reaction L-glutamyl-tRNA(Gln) + L-glutamine + ATP + H2O = L-glutaminyl-tRNA(Gln) + L-glutamate + ADP + phosphate + H(+). The catalysed reaction is L-aspartyl-tRNA(Asn) + L-glutamine + ATP + H2O = L-asparaginyl-tRNA(Asn) + L-glutamate + ADP + phosphate + 2 H(+). In terms of biological role, allows the formation of correctly charged Asn-tRNA(Asn) or Gln-tRNA(Gln) through the transamidation of misacylated Asp-tRNA(Asn) or Glu-tRNA(Gln) in organisms which lack either or both of asparaginyl-tRNA or glutaminyl-tRNA synthetases. The reaction takes place in the presence of glutamine and ATP through an activated phospho-Asp-tRNA(Asn) or phospho-Glu-tRNA(Gln). The protein is Glutamyl-tRNA(Gln) amidotransferase subunit C of Halalkalibacterium halodurans (strain ATCC BAA-125 / DSM 18197 / FERM 7344 / JCM 9153 / C-125) (Bacillus halodurans).